Reading from the N-terminus, the 157-residue chain is Transcriptional repressor NrdR (157 aa).

A zinc finger lies at 3-34; sequence CPFCRHPDSRVIDSRTSDDGLSIRRRRQCPEC. Residues 46–136 form the ATP-cone domain; it reads LSVIKRSGVV…VYQAFDSLED (91 aa).

This sequence belongs to the NrdR family. Requires Zn(2+) as cofactor.

Its function is as follows. Negatively regulates transcription of bacterial ribonucleotide reductase nrd genes and operons by binding to NrdR-boxes. This chain is Transcriptional repressor NrdR, found in Leifsonia xyli subsp. xyli (strain CTCB07).